The chain runs to 343 residues: MSDRQAALDMALKQIEKQFGKGSIMKLGEQAERRVSTVSSGSLALDVALGVGGYPRGRIIEIYGPESSGKTTVSLHAIAEVQRQGGQAAFIDAEHAMDPVYAQKLGVNIDELLLSQPDTGEQGLEIAEALVRSGAVDIIVIDSVAALVPKAEIEGDMGDSHVGLQARLMSQALRKLSGAINKSKTIAIFINQIREKVGVMFGNPETTPGGRALKFYSTVRLEVRRAEQLKQGNDIVGNKTKVKVVKNKVAPPFRVAEVDIMYGEGISREGEILDMASELDIVQKSGAWYSYNEERLGQGRENSKQFLKENTDLREEIAFFIREHHGISEDSGAEGAEDSTLLD.

64 to 71 (GPESSGKT) serves as a coordination point for ATP.

It belongs to the RecA family.

It localises to the cytoplasm. Its function is as follows. Can catalyze the hydrolysis of ATP in the presence of single-stranded DNA, the ATP-dependent uptake of single-stranded DNA by duplex DNA, and the ATP-dependent hybridization of homologous single-stranded DNAs. It interacts with LexA causing its activation and leading to its autocatalytic cleavage. In Bacillus cereus (strain ATCC 14579 / DSM 31 / CCUG 7414 / JCM 2152 / NBRC 15305 / NCIMB 9373 / NCTC 2599 / NRRL B-3711), this protein is Protein RecA.